The primary structure comprises 288 residues: Glycine--tRNA ligase alpha subunit (288 aa).

It belongs to the class-II aminoacyl-tRNA synthetase family. In terms of assembly, tetramer of two alpha and two beta subunits.

Its subcellular location is the cytoplasm. It carries out the reaction tRNA(Gly) + glycine + ATP = glycyl-tRNA(Gly) + AMP + diphosphate. In Rickettsia massiliae (strain Mtu5), this protein is Glycine--tRNA ligase alpha subunit.